The sequence spans 239 residues: 1-(5-phosphoribosyl)-5-[(5-phosphoribosylamino)methylideneamino] imidazole-4-carboxamide isomerase (239 aa).

Catalysis depends on D8, which acts as the Proton acceptor. The Proton donor role is filled by D129.

It belongs to the HisA/HisF family.

Its subcellular location is the cytoplasm. It catalyses the reaction 1-(5-phospho-beta-D-ribosyl)-5-[(5-phospho-beta-D-ribosylamino)methylideneamino]imidazole-4-carboxamide = 5-[(5-phospho-1-deoxy-D-ribulos-1-ylimino)methylamino]-1-(5-phospho-beta-D-ribosyl)imidazole-4-carboxamide. It functions in the pathway amino-acid biosynthesis; L-histidine biosynthesis; L-histidine from 5-phospho-alpha-D-ribose 1-diphosphate: step 4/9. In Bacillus anthracis (strain A0248), this protein is 1-(5-phosphoribosyl)-5-[(5-phosphoribosylamino)methylideneamino] imidazole-4-carboxamide isomerase.